A 279-amino-acid polypeptide reads, in one-letter code: Phosphonates import ATP-binding protein PhnC 2 (279 aa).

In terms of domain architecture, ABC transporter spans 10–253 (LSLKGVSVRY…VARNLYAKQS (244 aa)). 43–50 (GASGAGKS) contacts ATP. The span at 253 to 262 (SNASNTSAST) shows a compositional bias: low complexity. The tract at residues 253–279 (SNASNTSASTDSPRTLQSSQTKELLPC) is disordered. Positions 263–279 (DSPRTLQSSQTKELLPC) are enriched in polar residues.

Belongs to the ABC transporter superfamily. Phosphonates importer (TC 3.A.1.9.1) family. The complex is composed of two ATP-binding proteins (PhnC), two transmembrane proteins (PhnE) and a solute-binding protein (PhnD).

Its subcellular location is the cell inner membrane. The catalysed reaction is phosphonate(out) + ATP + H2O = phosphonate(in) + ADP + phosphate + H(+). Functionally, part of the ABC transporter complex PhnCDE involved in phosphonates import. Responsible for energy coupling to the transport system. The sequence is that of Phosphonates import ATP-binding protein PhnC 2 from Cupriavidus metallidurans (strain ATCC 43123 / DSM 2839 / NBRC 102507 / CH34) (Ralstonia metallidurans).